Consider the following 200-residue polypeptide: Glycerol-3-phosphate acyltransferase (200 aa).

5 helical membrane passes run 4 to 24 (FALC…AVIV), 53 to 73 (WAAL…VWCG), 80 to 100 (QFEL…PIFF), 115 to 135 (IAPI…LVFV), and 138 to 158 (GYSS…VWWF).

This sequence belongs to the PlsY family. Probably interacts with PlsX.

It localises to the cell inner membrane. The enzyme catalyses an acyl phosphate + sn-glycerol 3-phosphate = a 1-acyl-sn-glycero-3-phosphate + phosphate. It participates in lipid metabolism; phospholipid metabolism. Catalyzes the transfer of an acyl group from acyl-phosphate (acyl-PO(4)) to glycerol-3-phosphate (G3P) to form lysophosphatidic acid (LPA). This enzyme utilizes acyl-phosphate as fatty acyl donor, but not acyl-CoA or acyl-ACP. The polypeptide is Glycerol-3-phosphate acyltransferase (Actinobacillus succinogenes (strain ATCC 55618 / DSM 22257 / CCUG 43843 / 130Z)).